The chain runs to 186 residues: Ribosome-recycling factor (186 aa).

The protein belongs to the RRF family.

The protein localises to the cytoplasm. In terms of biological role, responsible for the release of ribosomes from messenger RNA at the termination of protein biosynthesis. May increase the efficiency of translation by recycling ribosomes from one round of translation to another. The polypeptide is Ribosome-recycling factor (Methylibium petroleiphilum (strain ATCC BAA-1232 / LMG 22953 / PM1)).